Reading from the N-terminus, the 569-residue chain is Proline--tRNA ligase (569 aa).

This sequence belongs to the class-II aminoacyl-tRNA synthetase family. ProS type 1 subfamily. In terms of assembly, homodimer.

It localises to the cytoplasm. It carries out the reaction tRNA(Pro) + L-proline + ATP = L-prolyl-tRNA(Pro) + AMP + diphosphate. Functionally, catalyzes the attachment of proline to tRNA(Pro) in a two-step reaction: proline is first activated by ATP to form Pro-AMP and then transferred to the acceptor end of tRNA(Pro). As ProRS can inadvertently accommodate and process non-cognate amino acids such as alanine and cysteine, to avoid such errors it has two additional distinct editing activities against alanine. One activity is designated as 'pretransfer' editing and involves the tRNA(Pro)-independent hydrolysis of activated Ala-AMP. The other activity is designated 'posttransfer' editing and involves deacylation of mischarged Ala-tRNA(Pro). The misacylated Cys-tRNA(Pro) is not edited by ProRS. This Endomicrobium trichonymphae protein is Proline--tRNA ligase.